Consider the following 300-residue polypeptide: Tyrosine recombinase XerD (300 aa).

The 84-residue stretch at 6 to 89 folds into the Core-binding (CB) domain; it reads LFHKRLIEQF…ALKVFFHFLK (84 aa). The 186-residue stretch at 108 to 293 folds into the Tyr recombinase domain; it reads RLPSILSTEE…ASESLIEKFH (186 aa). Residues Arg152, Lys174, His245, Arg248, and His271 contribute to the active site. Tyr280 functions as the O-(3'-phospho-DNA)-tyrosine intermediate in the catalytic mechanism.

Belongs to the 'phage' integrase family. XerD subfamily. As to quaternary structure, forms a cyclic heterotetrameric complex composed of two molecules of XerC and two molecules of XerD.

It localises to the cytoplasm. Its function is as follows. Site-specific tyrosine recombinase, which acts by catalyzing the cutting and rejoining of the recombining DNA molecules. The XerC-XerD complex is essential to convert dimers of the bacterial chromosome into monomers to permit their segregation at cell division. It also contributes to the segregational stability of plasmids. The polypeptide is Tyrosine recombinase XerD (Chlamydia trachomatis serovar D (strain ATCC VR-885 / DSM 19411 / UW-3/Cx)).